A 444-amino-acid polypeptide reads, in one-letter code: Deoxyguanosinetriphosphate triphosphohydrolase-like protein (444 aa).

Residues 1 to 26 (MIASPWHERRLNEDKKRRNDHRSPFQ) form a disordered region. The 192-residue stretch at 59–250 (RLTHSLEVSQ…MELADDIAYA (192 aa)) folds into the HD domain.

The protein belongs to the dGTPase family. Type 2 subfamily.

The polypeptide is Deoxyguanosinetriphosphate triphosphohydrolase-like protein (Shewanella woodyi (strain ATCC 51908 / MS32)).